Consider the following 85-residue polypeptide: Large ribosomal subunit protein bL27 (85 aa).

A disordered region spans residues 1–22 (MAHKKGQGSSRNGRDSPGQRRG).

Belongs to the bacterial ribosomal protein bL27 family.

The polypeptide is Large ribosomal subunit protein bL27 (Anaeromyxobacter dehalogenans (strain 2CP-1 / ATCC BAA-258)).